The chain runs to 285 residues: Nucleotide-binding protein FMG_1084 (285 aa).

An ATP-binding site is contributed by 8–15 (GMSGAGKS). 59 to 62 (DIRG) contributes to the GTP binding site.

This sequence belongs to the RapZ-like family.

In terms of biological role, displays ATPase and GTPase activities. This is Nucleotide-binding protein FMG_1084 from Finegoldia magna (strain ATCC 29328 / DSM 20472 / WAL 2508) (Peptostreptococcus magnus).